We begin with the raw amino-acid sequence, 180 residues long: Large ribosomal subunit protein uL6 (180 aa).

This sequence belongs to the universal ribosomal protein uL6 family. Part of the 50S ribosomal subunit.

Functionally, this protein binds to the 23S rRNA, and is important in its secondary structure. It is located near the subunit interface in the base of the L7/L12 stalk, and near the tRNA binding site of the peptidyltransferase center. In Thermus thermophilus (strain ATCC BAA-163 / DSM 7039 / HB27), this protein is Large ribosomal subunit protein uL6.